Here is a 567-residue protein sequence, read N- to C-terminus: Low-affinity glucose transporter HXT3 (567 aa).

Polar residues predominate over residues methionine 1–methionine 29. The interval methionine 1–asparagine 30 is disordered. Residues methionine 1–glycine 57 are Cytoplasmic-facing. A Phosphoserine modification is found at serine 23. The chain crosses the membrane as a helical span at residues alanine 58–tryptophan 78. Residues aspartate 79–glycine 113 are Extracellular-facing. Residues leucine 114–glycine 134 form a helical membrane-spanning segment. Residues aspartate 135 to lysine 140 are Cytoplasmic-facing. The helical transmembrane segment at methionine 141–isoleucine 161 threads the bilayer. At asparagine 162 to arginine 171 the chain is on the extracellular side. A helical membrane pass occupies residues isoleucine 172 to valine 192. Over alanine 193–arginine 198 the chain is Cytoplasmic. A helical membrane pass occupies residues glycine 199–threonine 219. The Extracellular segment spans residues asparagine 220–arginine 233. Residue asparagine 225 is glycosylated (N-linked (GlcNAc...) asparagine). Residues valine 234–proline 254 form a helical membrane-spanning segment. The Cytoplasmic portion of the chain corresponds to glutamate 255–aspartate 337. A helical transmembrane segment spans residues asparagine 338–serine 354. At aspartate 355–serine 360 the chain is on the extracellular side. The helical transmembrane segment at isoleucine 361–valine 378 threads the bilayer. Residues aspartate 379–asparagine 385 lie on the Cytoplasmic side of the membrane. Residues cysteine 386 to valine 406 traverse the membrane as a helical segment. The Extracellular segment spans residues threonine 407 to valine 428. N-linked (GlcNAc...) asparagine glycosylation occurs at asparagine 416. A helical transmembrane segment spans residues phenylalanine 429–isoleucine 449. Residues serine 450–threonine 466 are Cytoplasmic-facing. The helical transmembrane segment at alanine 467–isoleucine 487 threads the bilayer. Asparagine 488 is a topological domain (extracellular). A helical membrane pass occupies residues phenylalanine 489–phenylalanine 509. Residues valine 510–lysine 567 lie on the Cytoplasmic side of the membrane.

This sequence belongs to the major facilitator superfamily. Sugar transporter (TC 2.A.1.1) family.

The protein resides in the membrane. In terms of biological role, low-affinity glucose transporter. The polypeptide is Low-affinity glucose transporter HXT3 (HXT3) (Saccharomyces cerevisiae (strain ATCC 204508 / S288c) (Baker's yeast)).